A 126-amino-acid chain; its full sequence is uncharacterized protein (126 aa).

3 consecutive transmembrane segments (helical) span residues 4 to 24 (LIIAGILLLIKAMIFCIVNIL), 42 to 62 (AITIISSSVLYFLLSYYIINP), and 64 to 84 (ISASIIFDDCFSIFMLSSYTV).

It is found in the membrane. This is an uncharacterized protein from Saccharomyces cerevisiae (strain ATCC 204508 / S288c) (Baker's yeast).